The following is a 174-amino-acid chain: uncharacterized protein (174 aa).

Residues 78–97 (TFGRNIKTPDISNPTRARNE) form a disordered region.

The protein to yeast YMR295c.

This is an uncharacterized protein from Saccharomyces cerevisiae (strain ATCC 204508 / S288c) (Baker's yeast).